The primary structure comprises 655 residues: p-hydroxybenzoic acid efflux pump subunit AaeB (655 aa).

11 helical membrane-spanning segments follow: residues 13–33 (FAVK…HFQL), 38–58 (WAVL…GGEP), 69–89 (LRII…IAMI), 93–113 (LLMI…SSLV), 121–141 (WGLA…EPLL), 152–172 (EIVI…PRSI), 370–390 (LFWL…IAVV), 407–427 (FIYG…VIIP), 431–451 (QSML…GIEV), 459–479 (MGAL…TFHF), and 482–502 (FLDS…VILL).

The protein belongs to the aromatic acid exporter ArAE (TC 2.A.85) family.

It is found in the cell inner membrane. Forms an efflux pump with AaeA. Could function as a metabolic relief valve, allowing to eliminate certain compounds when they accumulate to high levels in the cell. This is p-hydroxybenzoic acid efflux pump subunit AaeB from Escherichia coli (strain SMS-3-5 / SECEC).